A 294-amino-acid chain; its full sequence is Factor associated with metabolism and energy (294 aa).

Basic residues predominate over residues 1–12; sequence MGLGHSKAHPRV. 2 disordered regions span residues 1-28 and 255-279; these read MGLG…TPST and FWDS…LVRT. Residue Gly2 is the site of N-myristoyl glycine attachment. Polar residues predominate over residues 17 to 28; it reads PLQSQETETPST. A compositionally biased stretch (basic and acidic residues) spans 268–279; the sequence is KDERRPQALVRT.

In terms of tissue distribution, expressed in proximal tubules of the kidney.

The protein resides in the cell membrane. The protein localises to the cytoplasmic vesicle. Its function is as follows. May be involved in tuning the metabolism, energy expenditure, and excretion processes. The polypeptide is Factor associated with metabolism and energy (Mus musculus (Mouse)).